The sequence spans 120 residues: Ribosomal protein eL22-like 1 (120 aa).

It belongs to the eukaryotic ribosomal protein eL22 family.

In Xenopus tropicalis (Western clawed frog), this protein is Ribosomal protein eL22-like 1 (rpl22l1).